The chain runs to 545 residues: Cytochrome P450 monooxygenase sdnB (545 aa).

A glycan (N-linked (GlcNAc...) asparagine) is linked at N5. A helical transmembrane segment spans residues 30–50 (SILALTPLQGIALFLCLFWGY). N-linked (GlcNAc...) asparagine glycosylation is present at N276. The helical transmembrane segment at 322–342 (LPILILIILVPAAHTTAMGIS) threads the bilayer. Residues N393 and N476 are each glycosylated (N-linked (GlcNAc...) asparagine). Residue C486 coordinates heme.

This sequence belongs to the cytochrome P450 family. Heme serves as cofactor.

The protein localises to the membrane. Its pathway is antibiotic biosynthesis. Cytochrome P450 monooxygenase; part of the gene cluster that mediates the biosynthesis of sordarin and hypoxysordarin, glycoside antibiotics with a unique tetracyclic diterpene aglycone structure. First, the geranylgeranyl diphosphate synthase sdnC constructs GGDP from farnesyl diphosphate and isopentenyl diphosphate. The diterpene cyclase sdnA then catalyzes the cyclization of GGDP to afford cycloaraneosene. Cycloaraneosene is then hydroxylated four times by the putative cytochrome P450 monooxygenases sdnB, sdnE, sdnF and sdnH to give a hydroxylated cycloaraneosene derivative such as cycloaraneosene-8,9,13,19-tetraol. Although the order of the hydroxylations is unclear, at least C8, C9 and C13 of the cycloaraneosene skeleton are hydroxylated before the sordaricin formation. Dehydration of the 13-hydroxy group of the hydroxylated cycloaraneosene derivative might be catalyzed by an unassigned hypothetical protein such as sdnG and sdnP to construct the cyclopentadiene moiety. The FAD-dependent oxidoreductase sdnN is proposed to catalyze the oxidation at C9 of the hydroxylated cycloaraneosene derivative and also catalyze the Baeyer-Villiger oxidation to give the lactone intermediate. The presumed lactone intermediate would be hydrolyzed to give an acrolein moiety and a carboxylate moiety. Then, [4+2]cycloaddition would occur between the acrolein moiety and the cyclopentadiene moiety to give sordaricin. SdnN might also be involved in the [4+2]cycloaddition after the hypothesized oxidation to accommodate the oxidized product and prompt the [4+2]cycloaddition. GDP-6-deoxy-D-altrose may be biosynthesized from GDP-D-mannose by the putative GDP-mannose-4,6-dehydratase sdnI and the short-chain dehydrogenase sdnK. The glycosyltransferase sdnJ catalyzes the attachment of 6-deoxy-D-altrose onto the 19-hydroxy group of sordaricin to give 4'-O-demethylsordarin. The methyltransferase sdnD would complete the biosynthesis of sordarin. Sordarin can be further modified into hypoxysordarin. The unique acyl chain at the 3'-hydroxy group of hypoxysordarin would be constructed by an iterative type I PKS sdnO and the trans-acting polyketide methyltransferase sdnL. SdnL would be responsible for the introduction of an alpha-methyl group of the polyketide chain. Alternatively, the beta-lactamase-like protein sdnR might be responsible for the cleavage and transfer of the polyketide chain from the PKS sdnO to sordarin. Two putative cytochrome P450 monooxygenases, sdnQ and sdnT, might catalyze the epoxidations of the polyketide chain to complete the biosynthesis of hypoxysordarin. Transcriptional regulators sdnM and sdnS are presumably encoded for the transcriptional regulation of the expression of the sdn gene cluster. In Sordaria araneosa (Pleurage araneosa), this protein is Cytochrome P450 monooxygenase sdnB.